Consider the following 584-residue polypeptide: Ubiquitin-like-specific protease 1D (584 aa).

Disordered regions lie at residues 28–64 (DKED…PKLL) and 99–323 (DLEE…QAAE). Residues 99-120 (DLEEEKQRRVLEGSKMEVDRSS) show a composition bias toward basic and acidic residues. Positions 121–132 (KVVSSTSSGSDV) are enriched in low complexity. Composition is skewed to basic and acidic residues over residues 142–165 (DTSR…KEVS) and 176–196 (PKTD…LGCE). Basic residues predominate over residues 197–207 (RRKHKAGRKPV). The segment covering 221–253 (GKAEHSAKQFDSGLKESKGNKKSKEPYGKKRPM) has biased composition (basic and acidic residues). A compositionally biased stretch (acidic residues) spans 261-274 (IDDDDDDDDDDDND). Residues 275-286 (TSGHETPREWSW) are compositionally biased toward basic and acidic residues. Residues His438, Asp461, and Cys525 contribute to the active site.

It belongs to the peptidase C48 family.

The protein localises to the nucleus speckle. Functionally, protease that catalyzes two essential functions in the SUMO pathway: processing of full-length SUMOs to their mature forms and deconjugation of SUMO from targeted proteins. Cleaves precursors of SUM1 and SUM2, but not of SUM3 or SUM5. Able to release SUM1 and SUM2 from conjugates, but unable to cleave SUM3. Protease activity mainly directed at deconjugating SUM1 and SUM2 from their target proteins. Regulates salt stress responses and flowering time. Redundant with ULP1C. The protein is Ubiquitin-like-specific protease 1D (ULP1D) of Arabidopsis thaliana (Mouse-ear cress).